The sequence spans 245 residues: Ribosomal protein L11 methyltransferase (245 aa).

S-adenosyl-L-methionine is bound by residues Thr101, Gly122, Asp144, and Asn184.

This sequence belongs to the methyltransferase superfamily. PrmA family.

Its subcellular location is the cytoplasm. It carries out the reaction L-lysyl-[protein] + 3 S-adenosyl-L-methionine = N(6),N(6),N(6)-trimethyl-L-lysyl-[protein] + 3 S-adenosyl-L-homocysteine + 3 H(+). Functionally, methylates ribosomal protein L11. The chain is Ribosomal protein L11 methyltransferase from Aquifex aeolicus (strain VF5).